We begin with the raw amino-acid sequence, 412 residues long: Phosphoribosylamine--glycine ligase (412 aa).

The region spanning 108–309 is the ATP-grasp domain; that stretch reads KSIMKKYGVP…LAQAIIDILA (202 aa). 134 to 190 serves as a coordination point for ATP; that stretch reads LDEKGVPLVIKADGLAAGKGVTVAFDIETAKSALADIFSGSQGKVVIEEFLDGEEFS. Residues Glu279 and Asn281 each coordinate Mg(2+).

The protein belongs to the GARS family. The cofactor is Mg(2+). Mn(2+) serves as cofactor.

It catalyses the reaction 5-phospho-beta-D-ribosylamine + glycine + ATP = N(1)-(5-phospho-beta-D-ribosyl)glycinamide + ADP + phosphate + H(+). The protein operates within purine metabolism; IMP biosynthesis via de novo pathway; N(1)-(5-phospho-D-ribosyl)glycinamide from 5-phospho-alpha-D-ribose 1-diphosphate: step 2/2. The sequence is that of Phosphoribosylamine--glycine ligase from Lactococcus lactis subsp. lactis (strain IL1403) (Streptococcus lactis).